Here is a 648-residue protein sequence, read N- to C-terminus: MIKITLPDGSIKEFENGVTPMDVAKSISEGLARNVISAAFNNITVEISTELTTDGSLVLYTWNDKDGKKAFWHSTSHVMAQVLEEMYPGLKLTLGPAIDNGFYYDVDFGDTKIVEADFKKIESRILEISKEKHEFKLRPVTKADALELYKDNEYKFELISNLEDGTITFCDHATFTDLCRGGHIPNTGIIKAVKIMSIAGAYWRGDEKNKQLTRVYGTSFPKQKDLTDYLELLEEAKRRDHRKLGKELELFAFSQKVGQGLPLWLPKGAALRDRLEQFLKKAQKKGGYEQVVTPHIGQKELYVTSGHYAKYGADSFQPISTPTEGEEFLLKPMNCPHHCEIYNVRPWSYKDLPKRYAEFGTVYRYEQSGELHGLTRVRGFTQDDAHIFCTPDQLDEEFKKVIDLVLYVFGSLGFENFTAQISLRDKENRDKYIGSDENWEKAENAIINAARDKNLNTVVEYGEAAFYGPKLDFMVKDALGRSWQLGTIQVDYNLPERFELTYKGSDDQLHRPVMIHRAPFGSMERFIAILLEHTAGNFPLWLMPEQAIILCLSDKYEIYAKKVLNLLENHEIRALIDNRNESIGRKIRDAEMQKTPFMLIVGEEEEKNNTISIRRHGQEGKGNITVTIEEFARIVNDEISKTLKTFEV.

A TGS domain is found at 1–61 (MIKITLPDGS…TTDGSLVLYT (61 aa)). The interval 240–539 (DHRKLGKELE…LLEHTAGNFP (300 aa)) is catalytic. 3 residues coordinate Zn(2+): C335, H386, and H516.

It belongs to the class-II aminoacyl-tRNA synthetase family. Homodimer. Requires Zn(2+) as cofactor.

The protein localises to the cytoplasm. The enzyme catalyses tRNA(Thr) + L-threonine + ATP = L-threonyl-tRNA(Thr) + AMP + diphosphate + H(+). Catalyzes the attachment of threonine to tRNA(Thr) in a two-step reaction: L-threonine is first activated by ATP to form Thr-AMP and then transferred to the acceptor end of tRNA(Thr). Also edits incorrectly charged L-seryl-tRNA(Thr). In Flavobacterium psychrophilum (strain ATCC 49511 / DSM 21280 / CIP 103535 / JIP02/86), this protein is Threonine--tRNA ligase.